Reading from the N-terminus, the 720-residue chain is Nucleolar protein 11 (720 aa).

A disordered region spans residues 365-392; sequence KDPETKPSNAGAQKKTRERKTNANAGNG.

It is found in the nucleus. It localises to the nucleolus. Functionally, ribosome biogenesis factor. May be required for both optimal rDNA transcription and pre-rRNA processing. This chain is Nucleolar protein 11 (nol11), found in Xenopus laevis (African clawed frog).